Consider the following 196-residue polypeptide: Peptidyl-tRNA hydrolase (196 aa).

Tyr18 is a tRNA binding site. The active-site Proton acceptor is the His23. Residues Phe69, Asn71, and Asn117 each coordinate tRNA.

This sequence belongs to the PTH family. As to quaternary structure, monomer.

The protein localises to the cytoplasm. It catalyses the reaction an N-acyl-L-alpha-aminoacyl-tRNA + H2O = an N-acyl-L-amino acid + a tRNA + H(+). Functionally, hydrolyzes ribosome-free peptidyl-tRNAs (with 1 or more amino acids incorporated), which drop off the ribosome during protein synthesis, or as a result of ribosome stalling. In terms of biological role, catalyzes the release of premature peptidyl moieties from peptidyl-tRNA molecules trapped in stalled 50S ribosomal subunits, and thus maintains levels of free tRNAs and 50S ribosomes. The sequence is that of Peptidyl-tRNA hydrolase from Vibrio cholerae serotype O1 (strain ATCC 39315 / El Tor Inaba N16961).